We begin with the raw amino-acid sequence, 1609 residues long: Probable cation-transporting ATPase I (1609 aa).

10 consecutive transmembrane segments (helical) span residues 30–50 (GAVN…WPVV), 176–196 (LAIL…SAAV), 238–258 (IALS…GTPL), 357–377 (LIAA…AGAI), 641–661 (VHLA…ASAG), 673–693 (WFSP…VSAS), 778–798 (ILAV…ALLV), 921–941 (LFEG…ATGV), 969–989 (TSKV…LALL), and 997–1017 (AVAD…PLVA). Catalysis depends on aspartate 1053, which acts as the 4-aspartylphosphate intermediate. Mg(2+) is bound by residues aspartate 1335 and aspartate 1339. 2 helical membrane-spanning segments follow: residues 1396–1416 (ILVG…VFGA) and 1426–1446 (LLLV…VTSQ). Residues 1447–1476 (YEEPGEDEYQTDEEADEARRTHQHEVLTGP) form a disordered region. Acidic residues predominate over residues 1449–1462 (EPGEDEYQTDEEAD). 2 helical membrane passes run 1542-1562 (VVAT…TPVI) and 1573-1593 (PIAW…SVLA).

Belongs to the cation transport ATPase (P-type) (TC 3.A.3) family.

The protein resides in the cell membrane. The catalysed reaction is ATP + H2O = ADP + phosphate + H(+). This Mycobacterium leprae (strain TN) protein is Probable cation-transporting ATPase I (ctpI).